The chain runs to 209 residues: Large ribosomal subunit protein uL4 (209 aa).

The segment at 46–71 (GTSSTKTRSEVRGSSKKPWKQKGTGR) is disordered. The span at 59 to 71 (SSKKPWKQKGTGR) shows a compositional bias: basic residues.

This sequence belongs to the universal ribosomal protein uL4 family. In terms of assembly, part of the 50S ribosomal subunit.

Its function is as follows. One of the primary rRNA binding proteins, this protein initially binds near the 5'-end of the 23S rRNA. It is important during the early stages of 50S assembly. It makes multiple contacts with different domains of the 23S rRNA in the assembled 50S subunit and ribosome. Functionally, forms part of the polypeptide exit tunnel. The polypeptide is Large ribosomal subunit protein uL4 (Borrelia garinii subsp. bavariensis (strain ATCC BAA-2496 / DSM 23469 / PBi) (Borreliella bavariensis)).